A 925-amino-acid polypeptide reads, in one-letter code: Ubp5-interacting protein ftp105 (925 aa).

Positions 650 to 664 are enriched in low complexity; sequence EGSSDFESKSSDNTS. The tract at residues 650-671 is disordered; the sequence is EGSSDFESKSSDNTSLDGTPLQ.

The protein belongs to the hid-1 family. Interacts with ubp5.

It localises to the cytoplasm. The protein resides in the golgi apparatus. Its function is as follows. Required for the localization of ubp5 to the Golgi apparatus. Involved in detoxification of cadmium ion. The polypeptide is Ubp5-interacting protein ftp105 (ftp105) (Schizosaccharomyces pombe (strain 972 / ATCC 24843) (Fission yeast)).